The chain runs to 237 residues: Protein GrpE (237 aa).

Disordered stretches follow at residues Met-1 to Gln-52 and Lys-200 to Val-237. Positions Ala-27–Ser-40 are enriched in polar residues. Low complexity predominate over residues Gly-204–Pro-218.

This sequence belongs to the GrpE family. In terms of assembly, homodimer.

The protein localises to the cytoplasm. Its function is as follows. Participates actively in the response to hyperosmotic and heat shock by preventing the aggregation of stress-denatured proteins, in association with DnaK and GrpE. It is the nucleotide exchange factor for DnaK and may function as a thermosensor. Unfolded proteins bind initially to DnaJ; upon interaction with the DnaJ-bound protein, DnaK hydrolyzes its bound ATP, resulting in the formation of a stable complex. GrpE releases ADP from DnaK; ATP binding to DnaK triggers the release of the substrate protein, thus completing the reaction cycle. Several rounds of ATP-dependent interactions between DnaJ, DnaK and GrpE are required for fully efficient folding. This Prochlorococcus marinus (strain MIT 9313) protein is Protein GrpE.